The sequence spans 1407 residues: DNA-directed RNA polymerase subunit beta' (1407 aa).

Residues C70, C72, C85, and C88 each coordinate Zn(2+). 3 residues coordinate Mg(2+): D460, D462, and D464. Positions 814, 888, 895, and 898 each coordinate Zn(2+). Position 972 is an N6-acetyllysine (K972).

This sequence belongs to the RNA polymerase beta' chain family. The RNAP catalytic core consists of 2 alpha, 1 beta, 1 beta' and 1 omega subunit. When a sigma factor is associated with the core the holoenzyme is formed, which can initiate transcription. The cofactor is Mg(2+). Requires Zn(2+) as cofactor.

It catalyses the reaction RNA(n) + a ribonucleoside 5'-triphosphate = RNA(n+1) + diphosphate. Its function is as follows. DNA-dependent RNA polymerase catalyzes the transcription of DNA into RNA using the four ribonucleoside triphosphates as substrates. The chain is DNA-directed RNA polymerase subunit beta' from Shigella dysenteriae serotype 1 (strain Sd197).